Here is a 474-residue protein sequence, read N- to C-terminus: Glycogen synthase (474 aa).

Position 12 (Lys12) interacts with ADP-alpha-D-glucose.

This sequence belongs to the glycosyltransferase 1 family. Bacterial/plant glycogen synthase subfamily.

It carries out the reaction [(1-&gt;4)-alpha-D-glucosyl](n) + ADP-alpha-D-glucose = [(1-&gt;4)-alpha-D-glucosyl](n+1) + ADP + H(+). The protein operates within glycan biosynthesis; glycogen biosynthesis. Its function is as follows. Synthesizes alpha-1,4-glucan chains using ADP-glucose. The sequence is that of Glycogen synthase from Xanthomonas axonopodis pv. citri (strain 306).